We begin with the raw amino-acid sequence, 424 residues long: Serine--tRNA ligase (424 aa).

232 to 234 (TAE) lines the L-serine pocket. Residue 263-265 (RQE) coordinates ATP. L-serine is bound at residue glutamate 286. ATP is bound at residue 350 to 353 (EIGS). Position 386 (serine 386) interacts with L-serine.

This sequence belongs to the class-II aminoacyl-tRNA synthetase family. Type-1 seryl-tRNA synthetase subfamily. As to quaternary structure, homodimer. The tRNA molecule binds across the dimer.

Its subcellular location is the cytoplasm. The enzyme catalyses tRNA(Ser) + L-serine + ATP = L-seryl-tRNA(Ser) + AMP + diphosphate + H(+). It catalyses the reaction tRNA(Sec) + L-serine + ATP = L-seryl-tRNA(Sec) + AMP + diphosphate + H(+). Its pathway is aminoacyl-tRNA biosynthesis; selenocysteinyl-tRNA(Sec) biosynthesis; L-seryl-tRNA(Sec) from L-serine and tRNA(Sec): step 1/1. In terms of biological role, catalyzes the attachment of serine to tRNA(Ser). Is also able to aminoacylate tRNA(Sec) with serine, to form the misacylated tRNA L-seryl-tRNA(Sec), which will be further converted into selenocysteinyl-tRNA(Sec). The chain is Serine--tRNA ligase from Aster yellows witches'-broom phytoplasma (strain AYWB).